Here is a 412-residue protein sequence, read N- to C-terminus: AT-rich interactive domain-containing protein 3C (412 aa).

Low complexity predominate over residues 1-23 (MEALQKQQAARLAQGVGPLAPAC). The segment at 1-96 (MEALQKQQAA…SSQPPGLHPH (96 aa)) is disordered. Positions 50-73 (AEEEEDAEEDEEKREEAGAEEEAA) are enriched in acidic residues. The span at 78–87 (PGAQGPSSPS) shows a compositional bias: low complexity. The ARID domain maps to 113-205 (DPKRKEFLDD…YLYPYECETR (93 aa)). Disordered regions lie at residues 232 to 278 (TPLF…AHAC) and 388 to 412 (PVPA…SILP). The span at 259–272 (TQSSPGPAQGSTSG) shows a compositional bias: polar residues. In terms of domain architecture, REKLES spans 304-389 (LALGPTREKL…GVLFARRQPV (86 aa)).

Interacts (via REKLES DOMAIN) with NPM1; the interaction mediates ARID3C nuclear shuttling.

The protein localises to the nucleus. Functionally, transcription factor involved in monocyte-to-macrophage differentiation. Forms a complex with NPM1 to translocate to the nucleus, acting as a transcription factor that promotes the expression of the genes involved in macrophage differentiation, such as STAT3, STAT1 and JUNB. The protein is AT-rich interactive domain-containing protein 3C of Homo sapiens (Human).